A 906-amino-acid chain; its full sequence is ATP-dependent DNA helicase PIF1 (906 aa).

Disordered regions lie at residues 77–146 (DSEI…SSTF) and 229–297 (LEGS…PFKV). Residues 78 to 87 (SEIKESDDLS) are compositionally biased toward basic and acidic residues. A compositionally biased stretch (polar residues) spans 88-119 (KGQSHVYNGSPVTKNSILQIEKQQIQKSPRPT). The segment covering 120-132 (ETNKRMQIRKDPD) has biased composition (basic and acidic residues). The segment covering 234 to 261 (NKVQADNASPFRITSSFSSPSQIQNQGV) has biased composition (polar residues). The span at 273 to 291 (QNVSSASQSSSPPMTVSQV) shows a compositional bias: low complexity. 390 to 397 (GSAGTGKS) is an ATP binding site. Residues 840-859 (QAYVALSRAVSRAGLQVLNF) mediate DNA binding.

It belongs to the helicase family. PIF1 subfamily. As to quaternary structure, monomer. Interacts with telomerase. Mg(2+) serves as cofactor.

The protein resides in the nucleus. It localises to the mitochondrion. It catalyses the reaction Couples ATP hydrolysis with the unwinding of duplex DNA at the replication fork by translocating in the 5'-3' direction. This creates two antiparallel DNA single strands (ssDNA). The leading ssDNA polymer is the template for DNA polymerase III holoenzyme which synthesizes a continuous strand.. The catalysed reaction is ATP + H2O = ADP + phosphate + H(+). Functionally, DNA-dependent ATPase and 5'-3' DNA helicase required for the maintenance of both mitochondrial and nuclear genome stability. Efficiently unwinds G-quadruplex (G4) DNA structures and forked RNA-DNA hybrids. Resolves G4 structures, preventing replication pausing and double-strand breaks (DSBs) at G4 motifs. Involved in the maintenance of telomeric DNA. Inhibits telomere elongation, de novo telomere formation and telomere addition to DSBs via catalytic inhibition of telomerase. Reduces the processivity of telomerase by displacing active telomerase from DNA ends. Releases telomerase by unwinding the short telomerase RNA/telomeric DNA hybrid that is the intermediate in the telomerase reaction. Involved in the maintenance of ribosomal (rDNA). Required for efficient fork arrest at the replication fork barrier within rDNA. Involved in the maintenance of mitochondrial (mtDNA). Required to maintain mtDNA under conditions that introduce dsDNA breaks in mtDNA, either preventing or repairing dsDNA breaks. May inhibit replication progression to allow time for repair. May have a general role in chromosomal replication by affecting Okazaki fragment maturation. May have a role in conjunction with DNA2 helicase/nuclease in 5'-flap extension during Okazaki fragment processing. This chain is ATP-dependent DNA helicase PIF1, found in Candida albicans (strain SC5314 / ATCC MYA-2876) (Yeast).